A 353-amino-acid polypeptide reads, in one-letter code: S-adenosylmethionine:tRNA ribosyltransferase-isomerase (353 aa).

It belongs to the QueA family. As to quaternary structure, monomer.

It localises to the cytoplasm. It carries out the reaction 7-aminomethyl-7-carbaguanosine(34) in tRNA + S-adenosyl-L-methionine = epoxyqueuosine(34) in tRNA + adenine + L-methionine + 2 H(+). It functions in the pathway tRNA modification; tRNA-queuosine biosynthesis. Its function is as follows. Transfers and isomerizes the ribose moiety from AdoMet to the 7-aminomethyl group of 7-deazaguanine (preQ1-tRNA) to give epoxyqueuosine (oQ-tRNA). The protein is S-adenosylmethionine:tRNA ribosyltransferase-isomerase of Marinomonas sp. (strain MWYL1).